The chain runs to 509 residues: Maturase K (509 aa).

The protein belongs to the intron maturase 2 family. MatK subfamily.

It localises to the plastid. The protein resides in the chloroplast. In terms of biological role, usually encoded in the trnK tRNA gene intron. Probably assists in splicing its own and other chloroplast group II introns. The polypeptide is Maturase K (Nicotiana acuminata (Acuminate tobacco)).